The sequence spans 268 residues: Tryptophan synthase alpha chain (268 aa).

Catalysis depends on proton acceptor residues Glu49 and Asp60.

The protein belongs to the TrpA family. In terms of assembly, tetramer of two alpha and two beta chains.

The enzyme catalyses (1S,2R)-1-C-(indol-3-yl)glycerol 3-phosphate + L-serine = D-glyceraldehyde 3-phosphate + L-tryptophan + H2O. It functions in the pathway amino-acid biosynthesis; L-tryptophan biosynthesis; L-tryptophan from chorismate: step 5/5. The alpha subunit is responsible for the aldol cleavage of indoleglycerol phosphate to indole and glyceraldehyde 3-phosphate. This Escherichia coli O127:H6 (strain E2348/69 / EPEC) protein is Tryptophan synthase alpha chain.